Here is a 218-residue protein sequence, read N- to C-terminus: Imidazole glycerol phosphate synthase subunit HisH (218 aa).

Positions 7–211 (STVIIDTGCA…LALDKASLDA (205 aa)) constitute a Glutamine amidotransferase type-1 domain. The active-site Nucleophile is Cys82. Active-site residues include His186 and Glu188.

In terms of assembly, heterodimer of HisH and HisF.

The protein resides in the cytoplasm. The enzyme catalyses 5-[(5-phospho-1-deoxy-D-ribulos-1-ylimino)methylamino]-1-(5-phospho-beta-D-ribosyl)imidazole-4-carboxamide + L-glutamine = D-erythro-1-(imidazol-4-yl)glycerol 3-phosphate + 5-amino-1-(5-phospho-beta-D-ribosyl)imidazole-4-carboxamide + L-glutamate + H(+). The catalysed reaction is L-glutamine + H2O = L-glutamate + NH4(+). Its pathway is amino-acid biosynthesis; L-histidine biosynthesis; L-histidine from 5-phospho-alpha-D-ribose 1-diphosphate: step 5/9. IGPS catalyzes the conversion of PRFAR and glutamine to IGP, AICAR and glutamate. The HisH subunit catalyzes the hydrolysis of glutamine to glutamate and ammonia as part of the synthesis of IGP and AICAR. The resulting ammonia molecule is channeled to the active site of HisF. This chain is Imidazole glycerol phosphate synthase subunit HisH, found in Shewanella sediminis (strain HAW-EB3).